Here is a 373-residue protein sequence, read N- to C-terminus: Putative aminopeptidase SgcX (373 aa).

The a divalent metal cation site is built by H67 and D180. E212 (proton acceptor) is an active-site residue. The a divalent metal cation site is built by E213, D235, and H329.

This sequence belongs to the peptidase M42 family. A divalent metal cation serves as cofactor.

This Escherichia coli (strain K12) protein is Putative aminopeptidase SgcX (sgcX).